Here is a 227-residue protein sequence, read N- to C-terminus: Phosphoribosylformylglycinamidine synthase subunit PurQ (227 aa).

Residues 3–227 (FAVCVFPGSN…LMLWYSLLSD (225 aa)) enclose the Glutamine amidotransferase type-1 domain. The Nucleophile role is filled by Cys86. Active-site residues include His203 and Glu205.

In terms of assembly, part of the FGAM synthase complex composed of 1 PurL, 1 PurQ and 2 PurS subunits.

It is found in the cytoplasm. The catalysed reaction is N(2)-formyl-N(1)-(5-phospho-beta-D-ribosyl)glycinamide + L-glutamine + ATP + H2O = 2-formamido-N(1)-(5-O-phospho-beta-D-ribosyl)acetamidine + L-glutamate + ADP + phosphate + H(+). It carries out the reaction L-glutamine + H2O = L-glutamate + NH4(+). It functions in the pathway purine metabolism; IMP biosynthesis via de novo pathway; 5-amino-1-(5-phospho-D-ribosyl)imidazole from N(2)-formyl-N(1)-(5-phospho-D-ribosyl)glycinamide: step 1/2. Functionally, part of the phosphoribosylformylglycinamidine synthase complex involved in the purines biosynthetic pathway. Catalyzes the ATP-dependent conversion of formylglycinamide ribonucleotide (FGAR) and glutamine to yield formylglycinamidine ribonucleotide (FGAM) and glutamate. The FGAM synthase complex is composed of three subunits. PurQ produces an ammonia molecule by converting glutamine to glutamate. PurL transfers the ammonia molecule to FGAR to form FGAM in an ATP-dependent manner. PurS interacts with PurQ and PurL and is thought to assist in the transfer of the ammonia molecule from PurQ to PurL. This chain is Phosphoribosylformylglycinamidine synthase subunit PurQ, found in Aquifex aeolicus (strain VF5).